Consider the following 230-residue polypeptide: Porin OmpL (230 aa).

Residues 1 to 20 (MKKINAIILLSSLTSASVFA) form the signal peptide.

Belongs to the oligogalacturonate-specific porin KdgM (TC 1.B.35) family. OmpL subfamily.

It localises to the cell outer membrane. In terms of biological role, outer membrane channel protein that allows an efficient diffusion of low-molecular-weight solutes such as small sugars and tetraglycine. However, the specific substrate recognized by the OmpL channel is unknown. This chain is Porin OmpL (ompL), found in Escherichia coli (strain K12).